The chain runs to 242 residues: Zinc import ATP-binding protein ZnuC (242 aa).

One can recognise an ABC transporter domain in the interval 24-241 (INVKDLSFAY…EKFLKMFSSY (218 aa)). 56-63 (GPNGGGKT) contacts ATP.

The protein belongs to the ABC transporter superfamily. Zinc importer (TC 3.A.1.15.5) family. As to quaternary structure, the complex is composed of two ATP-binding proteins (ZnuC), two transmembrane proteins (ZnuB) and a solute-binding protein (ZnuA).

It localises to the cell inner membrane. It carries out the reaction Zn(2+)(out) + ATP(in) + H2O(in) = Zn(2+)(in) + ADP(in) + phosphate(in) + H(+)(in). In terms of biological role, part of the ABC transporter complex ZnuABC involved in zinc import. Responsible for energy coupling to the transport system. The protein is Zinc import ATP-binding protein ZnuC of Ehrlichia ruminantium (strain Gardel).